We begin with the raw amino-acid sequence, 439 residues long: Secreted aspartic protease FUS4 (439 aa).

An N-terminal signal peptide occupies residues 1–22 (MLTIATLHVALQVFGAFSPSHA). In terms of domain architecture, Peptidase A1 spans 49-434 (YLFNVTVGSP…NFEDRSFGLA (386 aa)). N-linked (GlcNAc...) asparagine glycosylation is found at Asn52 and Asn61. Residue Asp67 is part of the active site. Residues Asn101, Asn107, and Asn123 are each glycosylated (N-linked (GlcNAc...) asparagine). Residue Asp296 is part of the active site. Cys352 and Cys390 are oxidised to a cystine.

This sequence belongs to the peptidase A1 family.

Its subcellular location is the secreted. Its function is as follows. Secreted aspartic protease; part of the gene cluster that mediates the biosynthesis of the mycotoxin fusarin C. Within the cluster, FUS1, FUS2, FUS8 and FUS9 are sufficient for fusarin production. The other FUS cluster members are not essential for fusarin C biosynthesis. In Gibberella moniliformis (strain M3125 / FGSC 7600) (Maize ear and stalk rot fungus), this protein is Secreted aspartic protease FUS4.